We begin with the raw amino-acid sequence, 1006 residues long: E3 ubiquitin-protein ligase MIB1 (1006 aa).

One can recognise an MIB/HERC2 1 domain in the interval 6 to 74 (NNRVMVEGVG…AYDLRILDSA (69 aa)). The ZZ-type zinc-finger motif lies at 80-132 (HDGTMCDTCRQQPIIGIRWKCAECTNYDLCTVCYHGDKHHLRHRFYRITTPGS). Zn(2+) is bound by residues cysteine 85, cysteine 88, cysteine 100, cysteine 103, cysteine 109, cysteine 112, histidine 118, and histidine 122. Residues 143 to 221 (SKKITARGIF…MSDLKCVQDA (79 aa)) form the MIB/HERC2 2 domain. Serine 408 carries the post-translational modification Phosphoserine. ANK repeat units lie at residues 430–460 (DLNE…DVNG), 463–492 (AGHT…DVEA), 496–525 (DGDR…DLNA), 529–558 (RRQT…HPSL), 562–591 (EGDT…DVTI), 595–627 (NGFN…IVDE), 631–661 (DGYT…NLDI), 665–694 (NQQT…KLDI), and 698–729 (DGDT…KVDA). 2 RING-type zinc fingers span residues 819-854 (CMVC…LICK) and 866-901 (CVVC…VQCR). The stretch at 935–962 (QKDKDNTNVNADVQKLQQQLQDIKEQTM) forms a coiled coil. The RING-type 3 zinc-finger motif lies at 963 to 996 (CPVCLDRLKNMIFLCGHGTCQLCGDRMSECPICR).

Interacts with CEP131 and PCM1. Ubiquitinated; possibly via autoubiquitination. Ubiquitinated; this modification is inhibited in response to cellular stress, such as ultraviolet light (UV) radiation or heat shock. Widely expressed at low level. Expressed at higher level in spinal cord, ovary, whole brain, and all specific brain regions examined.

Its subcellular location is the cytoplasm. The protein localises to the cytoskeleton. It localises to the microtubule organizing center. It is found in the centrosome. The protein resides in the centriolar satellite. Its subcellular location is the cell membrane. It catalyses the reaction S-ubiquitinyl-[E2 ubiquitin-conjugating enzyme]-L-cysteine + [acceptor protein]-L-lysine = [E2 ubiquitin-conjugating enzyme]-L-cysteine + N(6)-ubiquitinyl-[acceptor protein]-L-lysine.. The protein operates within protein modification; protein ubiquitination. In terms of biological role, E3 ubiquitin-protein ligase that mediates ubiquitination of Delta receptors, which act as ligands of Notch proteins. Positively regulates the Delta-mediated Notch signaling by ubiquitinating the intracellular domain of Delta, leading to endocytosis of Delta receptors. Probably mediates ubiquitination and subsequent proteasomal degradation of DAPK1, thereby antagonizing anti-apoptotic effects of DAPK1 to promote TNF-induced apoptosis. Involved in ubiquitination of centriolar satellite CEP131, CEP290 and PCM1 proteins and hence inhibits primary cilium formation in proliferating cells. Mediates 'Lys-63'-linked polyubiquitination of TBK1, which probably participates in kinase activation. Functionally, (Microbial infection) During adenovirus infection, mediates ubiquitination of Core-capsid bridging protein. This allows viral genome delivery into nucleus for infection. The polypeptide is E3 ubiquitin-protein ligase MIB1 (MIB1) (Homo sapiens (Human)).